The primary structure comprises 85 residues: Beta-defensin 18 (85 aa).

The first 23 residues, 1–23, serve as a signal peptide directing secretion; the sequence is MQSAMKLFFIFLIFVFSVSCGPS. 3 disulfides stabilise this stretch: C39-C65, C46-C60, and C50-C66.

This sequence belongs to the beta-defensin family.

It localises to the secreted. Functionally, has antibacterial activity. The sequence is that of Beta-defensin 18 (Defb18) from Rattus norvegicus (Rat).